We begin with the raw amino-acid sequence, 349 residues long: Small ribosomal subunit biogenesis GTPase RsgA (349 aa).

The span at 1 to 11 shows a compositional bias: basic residues; sequence MSKKKLSKGQQ. A disordered region spans residues 1-29; it reads MSKKKLSKGQQRRVSANHQRRLKKTESKV. The 171-residue stretch at 102–272 folds into the CP-type G domain; the sequence is HSVLTRPDYY…VIDSPGVREF (171 aa). Residues 158–161 and 212–220 contribute to the GTP site; these read NKID and GQSGVGKSS. Residues C296, C301, H303, and C309 each contribute to the Zn(2+) site.

The protein belongs to the TRAFAC class YlqF/YawG GTPase family. RsgA subfamily. In terms of assembly, monomer. Associates with 30S ribosomal subunit, binds 16S rRNA. It depends on Zn(2+) as a cofactor.

It localises to the cytoplasm. In terms of biological role, one of several proteins that assist in the late maturation steps of the functional core of the 30S ribosomal subunit. Helps release RbfA from mature subunits. May play a role in the assembly of ribosomal proteins into the subunit. Circularly permuted GTPase that catalyzes slow GTP hydrolysis, GTPase activity is stimulated by the 30S ribosomal subunit. In Pectobacterium carotovorum subsp. carotovorum (strain PC1), this protein is Small ribosomal subunit biogenesis GTPase RsgA.